Consider the following 98-residue polypeptide: NADH-ubiquinone oxidoreductase chain 4L (98 aa).

A run of 3 helical transmembrane segments spans residues 1–21, 28–48, and 59–79; these read MMSI…GVLI, STLL…ALLI, and APLV…ALLV.

This sequence belongs to the complex I subunit 4L family. Core subunit of respiratory chain NADH dehydrogenase (Complex I) which is composed of 45 different subunits.

It localises to the mitochondrion inner membrane. The catalysed reaction is a ubiquinone + NADH + 5 H(+)(in) = a ubiquinol + NAD(+) + 4 H(+)(out). Its function is as follows. Core subunit of the mitochondrial membrane respiratory chain NADH dehydrogenase (Complex I) which catalyzes electron transfer from NADH through the respiratory chain, using ubiquinone as an electron acceptor. Part of the enzyme membrane arm which is embedded in the lipid bilayer and involved in proton translocation. The protein is NADH-ubiquinone oxidoreductase chain 4L (MT-ND4L) of Pseudocheirus peregrinus (Common ring-tailed possum).